The following is a 306-amino-acid chain: Curved DNA-binding protein (306 aa).

The region spanning 5–69 is the J domain; sequence DYYAIMGVKP…QRRAEYDQMW (65 aa).

It is found in the cytoplasm. Its subcellular location is the nucleoid. In terms of biological role, DNA-binding protein that preferentially recognizes a curved DNA sequence. It is probably a functional analog of DnaJ; displays overlapping activities with DnaJ, but functions under different conditions, probably acting as a molecular chaperone in an adaptive response to environmental stresses other than heat shock. Lacks autonomous chaperone activity; binds native substrates and targets them for recognition by DnaK. Its activity is inhibited by the binding of CbpM. This is Curved DNA-binding protein from Shigella boydii serotype 18 (strain CDC 3083-94 / BS512).